The following is a 291-amino-acid chain: Transcription factor bHLH53 (291 aa).

The bHLH domain occupies 163–212 (PTLSSQSIAARGRRRRIAEKTHELGKLIPGGNKLNTAEMFQAAAKYVKFL).

Homodimer. As to expression, expressed constitutively in roots, leaves, stems, and flowers.

It is found in the nucleus. In Arabidopsis thaliana (Mouse-ear cress), this protein is Transcription factor bHLH53 (BHLH53).